Consider the following 137-residue polypeptide: Envelope glycoprotein L (137 aa).

Positions 1 to 25 (MRAVGVFLATCLVTIFVLPTWGNWA) are cleaved as a signal peptide. The segment at 23–128 (NWAYPCCHVT…SVEDLFGANL (106 aa)) is interaction with gH. 2 cysteine pairs are disulfide-bonded: Cys28–Cys56 and Cys29–Cys79.

Belongs to the herpesviridae glycoprotein L family. Interacts with glycoprotein H (gH); this interaction is necessary for the correct processing and cell surface expression of gH. The heterodimer gH/gL seems to interact with gB trimers during fusion. The heterodimer gH/gL interacts with host EPHA2 to facilitate virus internalization and fusion.

It localises to the virion membrane. The protein localises to the host cell membrane. Its subcellular location is the host Golgi apparatus. It is found in the host trans-Golgi network. In terms of biological role, the heterodimer glycoprotein H-glycoprotein L is required for the fusion of viral and plasma membranes leading to virus entry into the host cell. Acts as a functional inhibitor of gH and maintains gH in an inhibited form. Upon binding to host integrins, gL dissociates from gH leading to activation of the viral fusion glycoproteins gB and gH. The heterodimer gH/gL targets also host EPHA2 to promote viral entry. In Homo sapiens (Human), this protein is Envelope glycoprotein L.